The following is a 542-amino-acid chain: Chaperonin GroEL 2 (542 aa).

Residues 29-32 (TLGP), 86-90 (DGTTT), G413, 477-479 (NAA), and D493 each bind ATP.

Belongs to the chaperonin (HSP60) family. As to quaternary structure, forms a cylinder of 14 subunits composed of two heptameric rings stacked back-to-back. Interacts with the co-chaperonin GroES.

It localises to the cytoplasm. It carries out the reaction ATP + H2O + a folded polypeptide = ADP + phosphate + an unfolded polypeptide.. Functionally, together with its co-chaperonin GroES, plays an essential role in assisting protein folding. The GroEL-GroES system forms a nano-cage that allows encapsulation of the non-native substrate proteins and provides a physical environment optimized to promote and accelerate protein folding. This Frankia alni (strain DSM 45986 / CECT 9034 / ACN14a) protein is Chaperonin GroEL 2.